The primary structure comprises 1049 residues: Presequence protease, mitochondrial (1049 aa).

The transit peptide at 1 to 39 directs the protein to the mitochondrion; sequence MLRSYLHLGRHRTPAFRQPLGRLLRPTASILQYAQSRTL. H113 contacts Zn(2+). E116 (proton acceptor) is an active-site residue. H117 is a binding site for Zn(2+). Residue E189 is part of the active site. E222 lines the Zn(2+) pocket.

It belongs to the peptidase M16 family. PreP subfamily. Monomer and homodimer; homodimerization is induced by binding of the substrate. Zn(2+) serves as cofactor.

It is found in the mitochondrion intermembrane space. It localises to the mitochondrion matrix. Functionally, degrades mitochondrial transit peptides after their cleavage in the intermembrane space or in the matrix, and presequence peptides; clearance of these peptides is required to keep the presequence processing machinery running. Preferentially cleaves the N-terminal side of paired basic amino acid residues. Also degrades other unstructured peptides. May function as an ATP-dependent peptidase as opposed to a metalloendopeptidase. The sequence is that of Presequence protease, mitochondrial (cym1) from Emericella nidulans (strain FGSC A4 / ATCC 38163 / CBS 112.46 / NRRL 194 / M139) (Aspergillus nidulans).